Reading from the N-terminus, the 548-residue chain is Chaperonin GroEL (548 aa).

ATP is bound by residues 29–32 (TLGP), Lys-50, 86–90 (DGTTT), Gly-416, and Asp-497.

The protein belongs to the chaperonin (HSP60) family. In terms of assembly, forms a cylinder of 14 subunits composed of two heptameric rings stacked back-to-back. Interacts with the co-chaperonin GroES.

The protein resides in the cytoplasm. The enzyme catalyses ATP + H2O + a folded polypeptide = ADP + phosphate + an unfolded polypeptide.. Together with its co-chaperonin GroES, plays an essential role in assisting protein folding. The GroEL-GroES system forms a nano-cage that allows encapsulation of the non-native substrate proteins and provides a physical environment optimized to promote and accelerate protein folding. This chain is Chaperonin GroEL, found in Neorickettsia sennetsu (strain ATCC VR-367 / Miyayama) (Ehrlichia sennetsu).